The chain runs to 226 residues: Histone H1.5 (226 aa).

Residues 1 to 16 show a composition bias toward low complexity; that stretch reads MSETAPAETATPAPVE. Residues 1 to 44 form a disordered region; it reads MSETAPAETATPAPVEKSPAKKKATKKAAGAGAAKRKATGPPVS. Serine 2 carries the post-translational modification N-acetylserine; partial. Serine 2 carries the post-translational modification Phosphoserine. Position 11 is a phosphothreonine; by GSK3 (threonine 11). The residue at position 17 (lysine 17) is an N6-acetyllysine. Residue serine 18 is modified to Phosphoserine. Lysine 27 carries the N6-methyllysine modification. Lysine 37 carries the post-translational modification N6-(beta-hydroxybutyryl)lysine; alternate. Position 37 is an N6-succinyllysine; alternate (lysine 37). Threonine 39 carries the post-translational modification Phosphothreonine. An H15 domain is found at 39–112; it reads TGPPVSELIT…GASGSFKLNK (74 aa). Lysine 49 is subject to N6-acetyllysine. Lysine 55 is modified (N6-(beta-hydroxybutyryl)lysine). Position 57 is a citrulline (arginine 57). At lysine 67 the chain carries N6-(beta-hydroxybutyryl)lysine. The residue at position 78 (lysine 78) is an N6-acetyllysine. Lysine 88, lysine 93, and lysine 109 each carry N6-(beta-hydroxybutyryl)lysine. Residues 98 to 226 form a disordered region; sequence QTKGTGASGS…KAKKAAAKKK (129 aa). Positions 122 to 133 are enriched in basic residues; it reads KAKKAGAAKAKK. Threonine 138 and threonine 155 each carry phosphothreonine. Positions 140 to 161 are enriched in basic residues; sequence KKAKKAAGAKKAVKKTPKKAKK. At lysine 168 the chain carries N6-acetyllysine. The segment covering 169 to 187 has biased composition (basic residues); the sequence is KVAKSPKKAKAAAKPKKAT. Residues serine 173 and serine 189 each carry the phosphoserine modification. Residues 194–226 are compositionally biased toward basic residues; it reads KAVKPKAAKPKAAKPKAAKPKAAKAKKAAAKKK.

It belongs to the histone H1/H5 family. Interacts with MSX1. Post-translationally, H1 histones are progressively phosphorylated during the cell cycle, becoming maximally phosphorylated during late G2 phase and M phase, and being dephosphorylated sharply thereafter. Phosphorylated at Thr-11 by GSK3B during mitosis in prometaphase and dephosphorylated in telophase. In terms of processing, citrullination at Arg-57 (H1R54ci) by PADI4 takes place within the DNA-binding site of H1 and results in its displacement from chromatin and global chromatin decondensation, thereby promoting pluripotency and stem cell maintenance. Ubiquitous. Expressed in the majority of the cell lines tested and in testis.

The protein resides in the nucleus. The protein localises to the chromosome. Histone H1 protein binds to linker DNA between nucleosomes forming the macromolecular structure known as the chromatin fiber. Histones H1 are necessary for the condensation of nucleosome chains into higher-order structured fibers. Also acts as a regulator of individual gene transcription through chromatin remodeling, nucleosome spacing and DNA methylation. This Homo sapiens (Human) protein is Histone H1.5.